A 1036-amino-acid polypeptide reads, in one-letter code: MWRFSGRRGLCAVQRLSCGRVHHRVWREKSDQACERALQYKVGEKIHGFTVNQVTPVPELFLTAVKLSHDNTGARYLHLAREDKNNLFSVQFRTTPMDSTGVPHVLEHTVLCGSQKYPCRDPFFKMLNRSLSTFMNAMTASDYTIYPFSTQNPKDFQNLLSVYLDATFFPCLRELDFWQEGWRLEHENPRDPQTPLIFKGVVFNEMKGAFTDNERIFSQHLQNKLLPDHTYSVVSGGDPLCIPELTWEQLKQFHATHYHPSNARFFTYGNFQLEGHLKQIHEEALSKFQRLEQSTAVPAQPHWDKPREFHITCGPDSLATETAKQTTVSVSFLLPDITDTFEAFTLSLLSSLLIAGPNSPFYKALIESGLGTDFSPDVGYNGYTREAYFSVGLQGIAEKDVKTVRELVDRTIEEVIEKGFEDDRIEALLHKIEIQTKHQSASFGLTLTSYIASCWNHDGDPVELLQIGSQLTRFRKCLKENPKFLQEKVEQYFKNNQHKLTLSMKPDDKYYEKQTQMETEKLEQKVNSLSPADKQQIYEKGLELQTQQSKHQDASCLPALKVSDIEPSMPFTKLDIGLAAGDIPVQYCPQPTNGMVYFRAFSSLNTLPEDLRPIVPLFCSVLTKLGCGILNYREQAQQIELKTGGMSVTPHVLPDDSQLDTYEQGVLFSSLCLERNLPDMMHLWSEIFNNPCFEEEEHFKVLVKMTAQELSNGISDSGHLYAALRASKTLTPSGDLQETFSGMDQVKVMKRIAEMTDIKPILRKLPRIKKYLLNCDNMRCSVNATPQQMPQAEKEVENFLRNVGRSKKERKPVRPHIVEKPTPSGPSGAAHVSGSQIVRKLVTDPTFKPCQMKTHFVLPFPVNYIGECVRTVPYADPDHASLKILARLMTAKFLHTEIREKGGAYGGGAKLTHSGIFTLYSYRDPNSIETLQSFGKAVDWAKSGKFTQQDIDEAKLSVFSTVDSPVAPSDKGMDHFLYGLSDEMKQAYREQLFAVNHDKLTSVSHKYLGIGKSTHGLAILGPENSKIAKDPSWIIK.

The N-terminal 15 residues, 1-15 (MWRFSGRRGLCAVQR), are a transit peptide targeting the mitochondrion. Histidine 104 contacts Zn(2+). The Proton acceptor role is filled by glutamate 107. Residues histidine 108 and glutamate 205 each coordinate Zn(2+). A disulfide bridge connects residues cysteine 119 and cysteine 556. Residue lysine 759 is modified to N6-acetyllysine. Lysine 770 carries the N6-acetyllysine; alternate modification. Lysine 770 carries the post-translational modification N6-succinyllysine; alternate. The segment at 806–833 (SKKERKPVRPHIVEKPTPSGPSGAAHVS) is disordered. Residue lysine 848 is modified to N6-succinyllysine. At lysine 883 the chain carries N6-acetyllysine. Residue lysine 945 is modified to N6-succinyllysine.

It belongs to the peptidase M16 family. PreP subfamily. In terms of assembly, monomer and homodimer; homodimerization is induced by binding of the substrate. Zn(2+) is required as a cofactor. Post-translationally, a disulfide bond locks the enzyme in the closed conformation preventing substrate entry into the catalytic chamber.

It is found in the mitochondrion matrix. Mainly exists in a closed and catalytically competent conformation but a closed-to-open switch allows substrate entry into the catalytic chamber. Substrate binding induces closure and dimerization. A disulfide bond may lock the enzyme in a closed conformation preventing substrate entry into the catalytic chamber, participating in redox regulation of the enzyme. Inhibited by metal-chelating agents. Inhibited by nickel and zinc excess, and slightly activated by manganese. Functionally, metalloendopeptidase of the mitochondrial matrix that functions in peptide cleavage and degradation rather than in protein processing. Has an ATP-independent activity. Specifically cleaves peptides in the range of 5 to 65 residues. Shows a preference for cleavage after small polar residues and before basic residues, but without any positional preference. Degrades the transit peptides of mitochondrial proteins after their cleavage. Also degrades other unstructured peptides. It is also able to degrade amyloid-beta protein 40, one of the peptides produced by APP processing, when it accumulates in mitochondrion. It is a highly efficient protease, at least toward amyloid-beta protein 40. Cleaves that peptide at a specific position and is probably not processive, releasing digested peptides intermediates that can be further cleaved subsequently. It is also able to degrade amyloid-beta protein 42. The polypeptide is Presequence protease, mitochondrial (Mus musculus (Mouse)).